The sequence spans 71 residues: NAD(P)H-quinone oxidoreductase subunit O (71 aa).

The protein belongs to the complex I NdhO subunit family. In terms of assembly, NDH-1 can be composed of about 15 different subunits; different subcomplexes with different compositions have been identified which probably have different functions.

It is found in the cellular thylakoid membrane. The catalysed reaction is a plastoquinone + NADH + (n+1) H(+)(in) = a plastoquinol + NAD(+) + n H(+)(out). The enzyme catalyses a plastoquinone + NADPH + (n+1) H(+)(in) = a plastoquinol + NADP(+) + n H(+)(out). NDH-1 shuttles electrons from an unknown electron donor, via FMN and iron-sulfur (Fe-S) centers, to quinones in the respiratory and/or the photosynthetic chain. The immediate electron acceptor for the enzyme in this species is believed to be plastoquinone. Couples the redox reaction to proton translocation, and thus conserves the redox energy in a proton gradient. Cyanobacterial NDH-1 also plays a role in inorganic carbon-concentration. The protein is NAD(P)H-quinone oxidoreductase subunit O of Microcystis aeruginosa (strain NIES-843 / IAM M-2473).